We begin with the raw amino-acid sequence, 170 residues long: Adenine phosphoribosyltransferase (170 aa).

The protein belongs to the purine/pyrimidine phosphoribosyltransferase family. In terms of assembly, homodimer.

It localises to the cytoplasm. It carries out the reaction AMP + diphosphate = 5-phospho-alpha-D-ribose 1-diphosphate + adenine. It functions in the pathway purine metabolism; AMP biosynthesis via salvage pathway; AMP from adenine: step 1/1. In terms of biological role, catalyzes a salvage reaction resulting in the formation of AMP, that is energically less costly than de novo synthesis. This is Adenine phosphoribosyltransferase from Clostridioides difficile (strain 630) (Peptoclostridium difficile).